Reading from the N-terminus, the 87-residue chain is Mu-theraphotoxin-Hs1a (87 aa).

An N-terminal signal peptide occupies residues 1–24; the sequence is MVNMKASMFLTFAGLVLLFVVCYA. A propeptide spanning residues 25–52 is cleaved from the precursor; the sequence is SESEEKEFPKEMLSSIFAVDNDFKQEER. 3 disulfide bridges follow: cysteine 54–cysteine 67, cysteine 61–cysteine 72, and cysteine 66–cysteine 79.

This sequence belongs to the neurotoxin 10 (Hwtx-1) family. 51 (Hntx-8) subfamily. Hntx-8 sub-subfamily. In terms of tissue distribution, expressed by the venom gland.

The protein resides in the secreted. Probable sodium channel pore blocker that dose-dependently inhibits voltage-gated sodium channels (VGSC) on DUM neurons in a way similar to tetrodotoxin. Has no effect on the kinetics of activation and inactivation. Seems not to interact with VGSC in an inactivated state. In vivo, reversibly paralyzes cockroaches, and can enhance the muscular contraction elicited by stimulating its nerve. The sequence is that of Mu-theraphotoxin-Hs1a from Cyriopagopus schmidti (Chinese bird spider).